Consider the following 603-residue polypeptide: Arginine--tRNA ligase (603 aa).

The short motif at Pro-143–His-153 is the 'HIGH' region element.

This sequence belongs to the class-I aminoacyl-tRNA synthetase family. As to quaternary structure, monomer.

It localises to the cytoplasm. It catalyses the reaction tRNA(Arg) + L-arginine + ATP = L-arginyl-tRNA(Arg) + AMP + diphosphate. This is Arginine--tRNA ligase from Prochlorococcus marinus (strain SARG / CCMP1375 / SS120).